The following is a 328-amino-acid chain: dITP/XTP pyrophosphatase (328 aa).

The tract at residues 1–129 is unknown; sequence MSEKIYEYKD…ATSEQGFGDT (129 aa). The tract at residues 130–324 is NTP pyrophosphatase; that stretch reads ILIATRNEGK…KLMEVFPAWQ (195 aa). 134–139 lines the substrate pocket; sequence TRNEGK. The active-site Proton acceptor is Asp-196. Asp-196 is a Mg(2+) binding site. Substrate-binding positions include Ser-197, 280 to 283, Lys-303, and 308 to 309; these read FGYD and HR.

It belongs to the HAM1 NTPase family. In terms of assembly, homodimer. Requires Mg(2+) as cofactor.

It catalyses the reaction XTP + H2O = XMP + diphosphate + H(+). It carries out the reaction dITP + H2O = dIMP + diphosphate + H(+). The enzyme catalyses ITP + H2O = IMP + diphosphate + H(+). Pyrophosphatase that catalyzes the hydrolysis of nucleoside triphosphates to their monophosphate derivatives, with a high preference for the non-canonical purine nucleotides XTP (xanthosine triphosphate), dITP (deoxyinosine triphosphate) and ITP. Seems to function as a house-cleaning enzyme that removes non-canonical purine nucleotides from the nucleotide pool, thus preventing their incorporation into DNA/RNA and avoiding chromosomal lesions. In Streptococcus pyogenes serotype M6 (strain ATCC BAA-946 / MGAS10394), this protein is dITP/XTP pyrophosphatase.